We begin with the raw amino-acid sequence, 1004 residues long: E3 ubiquitin-protein ligase NEDD4-like (1004 aa).

The C2 domain maps to 30–154; it reads LASHHSRGLE…TEDPTMERPY (125 aa). 2 disordered regions span residues 207–230 and 272–407; these read SNDS…WEEK and AAHR…TPSV. Residues 221–254 form the WW 1 domain; that stretch reads PPLPPGWEEKVDNLGRTYYVNHNNRSTQWHRPSL. The residue at position 341 (Ser-341) is a Phosphoserine. Phosphothreonine is present on Thr-347. Composition is skewed to polar residues over residues 347–359 and 366–376; these read TPDS…SSLI and RLRSCSVTDTV. Ser-371 carries the post-translational modification Phosphoserine; by WNK1 and WNK4. Position 396 is a phosphothreonine; by SGK1 (Thr-396). The WW 2 domain maps to 414–447; sequence PGLPSGWEERKDAKGRTYYVNHNNRTTTWTRPIM. Positions 453 to 523 are disordered; it reads GASGSATNSN…YNSPKPQHKV (71 aa). Position 475 is a phosphoserine (Ser-475). Ser-477 is modified (phosphoserine; by SGK1). A phosphoserine mark is found at Ser-478, Ser-493, Ser-504, Ser-508, Ser-512, and Ser-516. Basic and acidic residues predominate over residues 489–500; sequence GAKDSPIRRAVK. WW domains are found at residues 526–559 and 577–610; these read SFLP…DPRL and GPLP…DPRL. In terms of domain architecture, HECT spans 669-1003; the sequence is RPDVLKARLW…VENAQGFEGV (335 aa). The active-site Glycyl thioester intermediate is Cys-971.

In terms of assembly, interacts with UBE2E3. Interacts with NDFIP1; this interaction activates the E3 ubiquitin-protein ligase. Interacts with NDFIP2; this interaction activates the E3 ubiquitin-protein ligase. Interacts (via WW domains) with SCN1A. Interacts (via WW domains) with SCN2A. Interacts (via WW domains) with SCN3A. Interacts (via WW domains) with SCN5A. Interacts (via WW domains) with SCN8A. Interacts (via WW domains) with SCN9A. Interacts (via WW domains) with SCN10A. Interacts (via WW domains) with CLCN5. Interacts with SMAD2. Interacts with SMAD3. Interacts with SMAD6. Interacts with SMAD7. The phosphorylated form interacts with 14-3-3 proteins. Interacts with TNK2. Interacts with WNK1. Interacts with SGK1. Interacts (via C2 domain) with NPC2. Interacts with ARRDC4. Interacts with KCNQ1; promotes internalization of KCNQ1. Interacts (via domains WW1, 3 and 4) with USP36; the interaction inhibits ubiquitination of, at least, NTRK1, KCNQ2 and KCNQ3 by NEDD4L. Interacts with PRRG4 (via cytoplasmic domain). Interacts with LDLRAD3; the interaction is direct. Interacts with UBE2D2. Interacts with TTYH2 and TTYH3. In terms of processing, phosphorylated; which impairs interaction with SCNN. Interaction with YWHAH inhibits dephosphorylation. Aldosterone induces Ser-477 phosphorylation by SGK1. Post-translationally, auto-ubiquitinated. Deubiquitinated by USP36, no effect on NEDD4L protein levels. Both proteins interact and regulate each other's ubiquitination levels. In terms of tissue distribution, highly expressed in liver and kidney. Also expressed in heart, brain and lung. Isoform 1 is expressed in kidney, lung and gut. Isoform 3 is ubiquitously expressed.

It is found in the cytoplasm. The protein localises to the golgi apparatus. The protein resides in the endosome. Its subcellular location is the multivesicular body. It carries out the reaction S-ubiquitinyl-[E2 ubiquitin-conjugating enzyme]-L-cysteine + [acceptor protein]-L-lysine = [E2 ubiquitin-conjugating enzyme]-L-cysteine + N(6)-ubiquitinyl-[acceptor protein]-L-lysine.. The catalysed reaction is [E2 ubiquitin-conjugating enzyme]-S-ubiquitinyl-L-cysteine + [acceptor protein]-L-cysteine = [E2 ubiquitin-conjugating enzyme]-L-cysteine + [acceptor protein]-S-ubiquitinyl-L-cysteine.. The protein operates within protein modification; protein ubiquitination. Activated by NDFIP1- and NDFIP2-binding. Functionally, E3 ubiquitin-protein ligase that mediates the polyubiquitination of lysine and cysteine residues on target proteins and is thereby implicated in the regulation of various signaling pathways including autophagy, innate immunity or DNA repair. Inhibits TGF-beta signaling by triggering SMAD2 and TGFBR1 ubiquitination and proteasome-dependent degradation. Downregulates autophagy and cell growth by ubiquitinating and reducing cellular ULK1 or ASCT2 levels. Promotes ubiquitination and internalization of various plasma membrane channels such as ENaC, SCN2A/Nav1.2, SCN3A/Nav1.3, SCN5A/Nav1.5, SCN9A/Nav1.7, SCN10A/Nav1.8, KCNA3/Kv1.3, KCNH2, EAAT1, KCNQ2/Kv7.2, KCNQ3/Kv7.3 or CLC5. Promotes ubiquitination and degradation of SGK1 and TNK2. Ubiquitinates BRAT1 and this ubiquitination is enhanced in the presence of NDFIP1. Plays a role in dendrite formation by melanocytes. Involved in the regulation of TOR signaling. Ubiquitinates and regulates protein levels of NTRK1 once this one is activated by NGF. Plays a role in antiviral innate immunity by catalyzing 'Lys-29'-linked cysteine ubiquitination of TRAF3, resulting in enhanced 'Lys-48' and 'Lys-63'-linked ubiquitination of TRAF3. Ubiquitinates TTYH2 and TYYH3 and regulates protein levels of TTYH2. This Mus musculus (Mouse) protein is E3 ubiquitin-protein ligase NEDD4-like (Nedd4l).